The chain runs to 131 residues: D-ribose pyranase (131 aa).

The active-site Proton donor is His-20. Residues Asp-28, His-98, and 120 to 122 (YAN) each bind substrate.

Belongs to the RbsD / FucU family. RbsD subfamily. In terms of assembly, homodecamer.

The protein localises to the cytoplasm. The catalysed reaction is beta-D-ribopyranose = beta-D-ribofuranose. It participates in carbohydrate metabolism; D-ribose degradation; D-ribose 5-phosphate from beta-D-ribopyranose: step 1/2. Its function is as follows. Catalyzes the interconversion of beta-pyran and beta-furan forms of D-ribose. This chain is D-ribose pyranase, found in Symbiobacterium thermophilum (strain DSM 24528 / JCM 14929 / IAM 14863 / T).